The chain runs to 159 residues: Neuroglobin-1 (159 aa).

Residues 3–151 form the Globin domain; sequence KLTEKEKELI…VVAAMSRGWA (149 aa). Heme b contacts are provided by H66 and H98.

Belongs to the globin family. Monomer. Homodimers and homotetramers. Mainly monomeric but also detected as part of homodimers and homotetramers.

The protein localises to the cytoplasm. The protein resides in the cytosol. Its subcellular location is the mitochondrion matrix. The catalysed reaction is Fe(III)-heme b-[protein] + nitric oxide + H2O = Fe(II)-heme b-[protein] + nitrite + 2 H(+). Its function is as follows. Monomeric globin with a bis-histidyl six-coordinate heme-iron atom through which it can bind dioxygen, carbon monoxide and nitric oxide. Could help transport oxygen and increase its availability to the metabolically active neuronal tissues, though its low quantity in tissues as well as its high affinity for dioxygen, which may limit its oxygen-releasing ability, argue against it. The ferrous/deoxygenated form exhibits a nitrite reductase activity and it could produce nitric oxide which in turn inhibits cellular respiration in response to hypoxia. In its ferrous/deoxygenated state, it may also exhibit GDI (Guanine nucleotide Dissociation Inhibitor) activity toward heterotrimeric G-alpha proteins, thereby regulating signal transduction to facilitate neuroprotective responses in the wake of hypoxia and associated oxidative stress. The protein is Neuroglobin-1 (ngb1) of Oncorhynchus mykiss (Rainbow trout).